We begin with the raw amino-acid sequence, 501 residues long: ATP-dependent rRNA helicase RRP3 (501 aa).

A coiled-coil region spans residues 3–44 (KIVKRKEKKANDELTSLAEKIRAKALENQKKLIEAEKEGGSE). A disordered region spans residues 36–79 (EAEKEGGSESDSEEDATAEKKKVLKSKSKSTVSTQNENTNEDES). Residues Ser-43, Ser-45, and Ser-47 each carry the phosphoserine modification. The Q motif signature appears at 81–109 (ESFSELNLVPELIQACKNLNYSKPTPIQS). One can recognise a Helicase ATP-binding domain in the interval 112–284 (IPPALEGHDI…RASLTNPVKC (173 aa)). ATP is bound at residue 125-132 (AQTGSGKT). A DEAD box motif is present at residues 231–234 (DEAD). A Helicase C-terminal domain is found at 307–461 (LKNTYLIYLL…NIILTLRDSV (155 aa)). Residues 480–501 (IARGKGRRGRMMTRENMDMGER) form a disordered region. Positions 491-501 (MTRENMDMGER) are enriched in basic and acidic residues.

This sequence belongs to the DEAD box helicase family. DDX47/RRP3 subfamily. As to quaternary structure, interacts with the SSU processome.

The protein localises to the nucleus. The enzyme catalyses ATP + H2O = ADP + phosphate + H(+). Functionally, ATP-dependent rRNA helicase required for pre-ribosomal RNA processing. Involved in the maturation of the 35S-pre-rRNA and to its cleavage to mature 18S rRNA. In Saccharomyces cerevisiae (strain YJM789) (Baker's yeast), this protein is ATP-dependent rRNA helicase RRP3.